Here is a 273-residue protein sequence, read N- to C-terminus: MDKYAVFGHPIKQSKSPFIHTLFARQTIQPLEYVAIEAPVDGFLNSVTHFFSNGGKGCNITVPFKEEAFQFADQLTDRAKLAGAVNTLKKLDDGIILGDNTDGEGLVQDLLQYQVPLQDKRILLIGAGGAARGVLLPLLKQNPSSITVVNRTYEKAEALAEIFSAYGAVEAVRMSDVTRSFDVIINSTSASLSGELPNISPVIFSKGSISYDMMYGKGKTVFNQWALDNDVYQAYDGLGMLVGQAAESFTVWRGLRPSSKQILRELRKNLEGM.

Shikimate is bound by residues 14-16 and threonine 61; that span reads SKS. Lysine 65 acts as the Proton acceptor in catalysis. Aspartate 77 serves as a coordination point for NADP(+). 2 residues coordinate shikimate: asparagine 86 and aspartate 102. Residues 126–130, 150–155, and methionine 213 each bind NADP(+); these read GAGGA and NRTYEK. Tyrosine 215 contacts shikimate. Glycine 237 serves as a coordination point for NADP(+).

The protein belongs to the shikimate dehydrogenase family. In terms of assembly, homodimer.

The enzyme catalyses shikimate + NADP(+) = 3-dehydroshikimate + NADPH + H(+). It participates in metabolic intermediate biosynthesis; chorismate biosynthesis; chorismate from D-erythrose 4-phosphate and phosphoenolpyruvate: step 4/7. Functionally, involved in the biosynthesis of the chorismate, which leads to the biosynthesis of aromatic amino acids. Catalyzes the reversible NADPH linked reduction of 3-dehydroshikimate (DHSA) to yield shikimate (SA). This is Shikimate dehydrogenase (NADP(+)) from Aliivibrio salmonicida (strain LFI1238) (Vibrio salmonicida (strain LFI1238)).